We begin with the raw amino-acid sequence, 232 residues long: 5'-methylthioadenosine/S-adenosylhomocysteine nucleosidase (232 aa).

E12 (proton acceptor) is an active-site residue. Substrate contacts are provided by residues G78, I152, and 173 to 174 (ME). D197 acts as the Proton donor in catalysis.

The protein belongs to the PNP/UDP phosphorylase family. MtnN subfamily. Homodimer.

The enzyme catalyses S-adenosyl-L-homocysteine + H2O = S-(5-deoxy-D-ribos-5-yl)-L-homocysteine + adenine. It catalyses the reaction S-methyl-5'-thioadenosine + H2O = 5-(methylsulfanyl)-D-ribose + adenine. It carries out the reaction 5'-deoxyadenosine + H2O = 5-deoxy-D-ribose + adenine. It participates in amino-acid biosynthesis; L-methionine biosynthesis via salvage pathway; S-methyl-5-thio-alpha-D-ribose 1-phosphate from S-methyl-5'-thioadenosine (hydrolase route): step 1/2. Catalyzes the irreversible cleavage of the glycosidic bond in both 5'-methylthioadenosine (MTA) and S-adenosylhomocysteine (SAH/AdoHcy) to adenine and the corresponding thioribose, 5'-methylthioribose and S-ribosylhomocysteine, respectively. Also cleaves 5'-deoxyadenosine, a toxic by-product of radical S-adenosylmethionine (SAM) enzymes, into 5-deoxyribose and adenine. Thus, is required for in vivo function of the radical SAM enzymes biotin synthase and lipoic acid synthase, that are inhibited by 5'-deoxyadenosine accumulation. The chain is 5'-methylthioadenosine/S-adenosylhomocysteine nucleosidase from Salmonella paratyphi A (strain ATCC 9150 / SARB42).